Reading from the N-terminus, the 443-residue chain is 3-ketoacyl-CoA thiolase 1, peroxisomal (443 aa).

The N-terminal 30 residues, 1–30 (MEKATERQRILLRHLQPSSSSDASLSASAC), are a transit peptide targeting the peroxisome. Catalysis depends on Cys130, which acts as the Acyl-thioester intermediate. Active-site proton acceptor residues include His385 and Cys417.

This sequence belongs to the thiolase-like superfamily. Thiolase family. As to quaternary structure, homodimer. Low levels in seedlings and leaves.

Its subcellular location is the peroxisome. It carries out the reaction an acyl-CoA + acetyl-CoA = a 3-oxoacyl-CoA + CoA. Its pathway is lipid metabolism; fatty acid metabolism. In terms of biological role, involved in fatty-acid beta-oxidation prior to gluconeogenesis during germination and subsequent seedling growth. Implicated in jasmonic acid (JA) biosynthesis. This chain is 3-ketoacyl-CoA thiolase 1, peroxisomal (KAT1), found in Arabidopsis thaliana (Mouse-ear cress).